The following is a 50-amino-acid chain: Cytochrome c-555 (50 aa).

Positions 7, 10, 11, and 25 each coordinate heme.

Binds 1 heme group per subunit.

The protein localises to the cell membrane. This Schinkia azotoformans (Bacillus azotoformans) protein is Cytochrome c-555.